Here is a 96-residue protein sequence, read N- to C-terminus: Exopolysaccharide production repressor protein (96 aa).

The next 2 helical transmembrane spans lie at 6–26 and 35–55; these read FVVSMLGALAAFAIATYFLTG and TLLCAVLIQVGYFLAVLFLVW. A disordered region spans residues 64-96; it reads LSPGQLPADPTNDEKQTGKLSLRRLNRPPHFNS.

It is found in the cell membrane. Its pathway is glycan metabolism; exopolysaccharide biosynthesis. Its function is as follows. Inhibition of exopolysaccharide synthesis (EPS) and nodulation ability (NOD). This Sinorhizobium fredii (strain NBRC 101917 / NGR234) protein is Exopolysaccharide production repressor protein (exoX).